The primary structure comprises 462 residues: MLAIFNTLTNKKEIFKPIHIGKVALYVCGVTAYDLCHIGHVRTFVTFDVVIRYLRYCGYEVNYIRNITDIEDKIIRKAANNGESCQQLTDRMIAEMHHDLDLLNILRPDKEPRATQHIKEIIQLTRQLIDKEHAYIASNGDVMFAIESANNYGILSSQNLNQLQIGQRVKITTVKRNPMDFVLWKMSKHGEPTWSSPWGNGRPGWHIECSAMSIKYLGKHFDIHGGGSDLIFPHHENEIAQSTCMENNPYVNFWMHSGMVTICNEKMSKSLSNFFTVRDVLKYYDAETVRYFLISSHYRKPLNYSEKSLQLARTALKSLYIALRNTKKEVIPSGGEYFIEQFMMAMNNDFNTPAAHAVLFQLAHEVNRLKTKNIKSAQGMAATLRYLANILGLLEQDPEVFLQKQKIVTDLNIALIEELVKQRNNIRKKHQWVQADKVREKLAAMGIVLEDTPQGTIWRRSF.

Cysteine 28 lines the Zn(2+) pocket. A 'HIGH' region motif is present at residues 30–40 (VTAYDLCHIGH). Zn(2+) contacts are provided by cysteine 209, histidine 234, and glutamate 238. The 'KMSKS' region motif lies at 266–270 (KMSKS). Lysine 269 lines the ATP pocket.

The protein belongs to the class-I aminoacyl-tRNA synthetase family. As to quaternary structure, monomer. Requires Zn(2+) as cofactor.

The protein localises to the cytoplasm. The enzyme catalyses tRNA(Cys) + L-cysteine + ATP = L-cysteinyl-tRNA(Cys) + AMP + diphosphate. The sequence is that of Cysteine--tRNA ligase from Baumannia cicadellinicola subsp. Homalodisca coagulata.